The primary structure comprises 545 residues: CTP synthase (545 aa).

The interval 1 to 265 (MTKYIFITGG…DEIVVKKLSL (265 aa)) is amidoligase domain. Position 13 (serine 13) interacts with CTP. Position 13 (serine 13) interacts with UTP. ATP-binding positions include 14–19 (SLGKGI) and aspartate 71. Positions 71 and 139 each coordinate Mg(2+). CTP contacts are provided by residues 146–148 (DIE), 186–191 (KTKPTQ), and lysine 222. UTP-binding positions include 186 to 191 (KTKPTQ) and lysine 222. One can recognise a Glutamine amidotransferase type-1 domain in the interval 290 to 541 (KIAMVGKYTE…VLAARIHHQE (252 aa)). Glycine 351 contributes to the L-glutamine binding site. The active-site Nucleophile; for glutamine hydrolysis is cysteine 378. Residues 379-382 (LGMQ), glutamate 402, and arginine 469 each bind L-glutamine. Catalysis depends on residues histidine 514 and glutamate 516.

It belongs to the CTP synthase family. In terms of assembly, homotetramer.

It carries out the reaction UTP + L-glutamine + ATP + H2O = CTP + L-glutamate + ADP + phosphate + 2 H(+). The enzyme catalyses L-glutamine + H2O = L-glutamate + NH4(+). The catalysed reaction is UTP + NH4(+) + ATP = CTP + ADP + phosphate + 2 H(+). Its pathway is pyrimidine metabolism; CTP biosynthesis via de novo pathway; CTP from UDP: step 2/2. With respect to regulation, allosterically activated by GTP, when glutamine is the substrate; GTP has no effect on the reaction when ammonia is the substrate. The allosteric effector GTP functions by stabilizing the protein conformation that binds the tetrahedral intermediate(s) formed during glutamine hydrolysis. Inhibited by the product CTP, via allosteric rather than competitive inhibition. Functionally, catalyzes the ATP-dependent amination of UTP to CTP with either L-glutamine or ammonia as the source of nitrogen. Regulates intracellular CTP levels through interactions with the four ribonucleotide triphosphates. The protein is CTP synthase of Legionella pneumophila (strain Corby).